Reading from the N-terminus, the 185-residue chain is QTGCYGVVNRIDTTGASCETAKPEKLNYCGVAASRKIAEGDLQSMDRYKTLIKKVGQKLCVDPAVIAGIISRESHAGKALKDGWGDNGNGFGLMQVDKRSHTPVGKWNGERHLTQGTEILISMIKKIQKKFPRWTKEQQLKGGISAYNAGSGNVRTYERMDIGTTHNDYANDVVARAQYYKQHGY.

The residue at position 1 (glutamine 1) is a Pyrrolidone carboxylic acid. Disulfide bonds link cysteine 4–cysteine 60 and cysteine 18–cysteine 29. Residues glutamate 73 and aspartate 86 contribute to the active site.

Belongs to the glycosyl hydrolase 23 family.

The protein resides in the secreted. The catalysed reaction is Hydrolysis of (1-&gt;4)-beta-linkages between N-acetylmuramic acid and N-acetyl-D-glucosamine residues in a peptidoglycan and between N-acetyl-D-glucosamine residues in chitodextrins.. This Casuarius casuarius (Southern cassowary) protein is Lysozyme g.